The following is a 295-amino-acid chain: Pyridoxal 5'-phosphate synthase subunit PdxS (295 aa).

Asp-25 provides a ligand contact to D-ribose 5-phosphate. Residue Lys-82 is the Schiff-base intermediate with D-ribose 5-phosphate of the active site. D-ribose 5-phosphate is bound at residue Gly-154. Arg-166 contributes to the D-glyceraldehyde 3-phosphate binding site. D-ribose 5-phosphate is bound by residues Gly-215 and 236–237; that span reads GS.

Belongs to the PdxS/SNZ family. As to quaternary structure, in the presence of PdxT, forms a dodecamer of heterodimers.

The catalysed reaction is aldehydo-D-ribose 5-phosphate + D-glyceraldehyde 3-phosphate + L-glutamine = pyridoxal 5'-phosphate + L-glutamate + phosphate + 3 H2O + H(+). The protein operates within cofactor biosynthesis; pyridoxal 5'-phosphate biosynthesis. Catalyzes the formation of pyridoxal 5'-phosphate from ribose 5-phosphate (RBP), glyceraldehyde 3-phosphate (G3P) and ammonia. The ammonia is provided by the PdxT subunit. Can also use ribulose 5-phosphate and dihydroxyacetone phosphate as substrates, resulting from enzyme-catalyzed isomerization of RBP and G3P, respectively. The sequence is that of Pyridoxal 5'-phosphate synthase subunit PdxS from Bacillus mycoides (strain KBAB4) (Bacillus weihenstephanensis).